Here is a 192-residue protein sequence, read N- to C-terminus: 3-isopropylmalate dehydratase small subunit (192 aa).

It belongs to the LeuD family. LeuD type 1 subfamily. Heterodimer of LeuC and LeuD.

It carries out the reaction (2R,3S)-3-isopropylmalate = (2S)-2-isopropylmalate. Its pathway is amino-acid biosynthesis; L-leucine biosynthesis; L-leucine from 3-methyl-2-oxobutanoate: step 2/4. In terms of biological role, catalyzes the isomerization between 2-isopropylmalate and 3-isopropylmalate, via the formation of 2-isopropylmaleate. The protein is 3-isopropylmalate dehydratase small subunit of Oceanobacillus iheyensis (strain DSM 14371 / CIP 107618 / JCM 11309 / KCTC 3954 / HTE831).